The following is a 481-amino-acid chain: Tagaturonate/fructuronate epimerase (481 aa).

The active-site Proton acceptor is aspartate 161. Histidine 162 contributes to the a divalent metal cation binding site. Glutamate 266 serves as the catalytic Proton donor. A divalent metal cation contacts are provided by lysine 308 and histidine 341.

This sequence belongs to the UxaE family. A divalent metal cation is required as a cofactor.

It carries out the reaction keto-D-tagaturonate = keto-D-fructuronate. Functionally, catalyzes the epimerization of D-tagaturonate (D-TagA) to D-fructuronate (D-FruA). The polypeptide is Tagaturonate/fructuronate epimerase (Thermotoga maritima (strain ATCC 43589 / DSM 3109 / JCM 10099 / NBRC 100826 / MSB8)).